We begin with the raw amino-acid sequence, 83 residues long: Small ribosomal subunit protein bS16 (83 aa).

It belongs to the bacterial ribosomal protein bS16 family.

In Thermosynechococcus vestitus (strain NIES-2133 / IAM M-273 / BP-1), this protein is Small ribosomal subunit protein bS16.